The chain runs to 315 residues: Secreted frizzled-related protein 3 (315 aa).

The signal sequence occupies residues 1–21 (MWRGLPALALAALLLLGRAPA). One can recognise an FZ domain in the interval 22–142 (GRAAACEPVR…LYDRGVCISP (121 aa)). Cystine bridges form between Cys-27/Cys-88, Cys-35/Cys-81, Cys-72/Cys-111, Cys-100/Cys-139, and Cys-104/Cys-128. Asn-41 carries N-linked (GlcNAc...) asparagine glycosylation. The NTR domain occupies 170 to 290 (CKCKPIKATQ…WDQKLRHLGK (121 aa)). The tract at residues 284–315 (KLRHLGKGKGEPGQSDSALKTGKPGNARQTRS) is disordered.

Belongs to the secreted frizzled-related protein (sFRP) family.

It is found in the secreted. Functionally, soluble frizzled-related proteins (sFRPS) function as modulators of Wnt signaling through direct interaction with Wnts. They have a role in regulating cell growth and differentiation in specific cell types. SFRP3/FRZB appears to be involved in limb skeletogenesis. Antagonist of Wnt8 signaling. Regulates chondrocyte maturation and long bone development. The sequence is that of Secreted frizzled-related protein 3 (FRZB) from Gallus gallus (Chicken).